A 464-amino-acid polypeptide reads, in one-letter code: MGSPAHRPALLLLLPPLLLLLLLRVPPSRSFPGSGDSPLEDDEVGYSHPRYKDTPWCSPIKVKYGDVYCRAPQGGYYKTALGTRCDIRCQKGYELHGSSLLICQSNKRWSDKVICKQKRCPTLAMPANGGFKCVDGAYFNSRCEYYCSPGYTLKGERTVTCMDNKAWSGRPASCVDMEPPRIKCPSVKERIAEPNKLTVRVSWETPEGRDTADGILTDVILKGLPPGSNFPEGDHKIQYTVYDRAENKGTCKFRVKVRVKRCGKLNAPENGYMKCSSDGDNYGATCEFSCIGGYELQGSPARVCQSNLAWSGTEPTCAAMNVNVGVRTAAALLDQFYEKRRLLIVSTPTARNLLYRLQLGMLQQAQCGLDLRHITVVELVGVFPTLIGRIGAKIMPPALALQLRLLLRIPLYSFSMVLVDKHGMDKERYVSLVMPVALFNLIDTFPLRKEEMVLQAEMSQTCNT.

The N-terminal stretch at 1-30 (MGSPAHRPALLLLLPPLLLLLLLRVPPSRS) is a signal peptide. Ser34 carries an O-linked (Xyl...) (chondroitin sulfate) serine glycan. Cystine bridges form between Cys57–Cys85, Cys69–Cys103, Cys89–Cys115, Cys120–Cys161, and Cys147–Cys174. 2 consecutive Sushi domains span residues 57 to 117 (CSPI…ICKQ) and 118 to 176 (KRCP…SCVD). The region spanning 177–259 (MEPPRIKCPS…TCKFRVKVRV (83 aa)) is the HYR domain. The region spanning 260–319 (KRCGKLNAPENGYMKCSSDGDNYGATCEFSCIGGYELQGSPARVCQSNLAWSGTEPTCAA) is the Sushi 3 domain. 2 disulfide bridges follow: Cys262/Cys304 and Cys290/Cys317.

As to expression, detected in fibroblasts (at protein level). Retina and heart; less in placenta, pancreas, lung, liver, skeletal muscle, kidney and brain.

Its subcellular location is the cell surface. In terms of biological role, may be involved in phagocytosis during disk shedding, cell adhesion to cells other than the pigment epithelium or signal transduction. The protein is Sushi repeat-containing protein SRPX (SRPX) of Homo sapiens (Human).